The chain runs to 371 residues: Alginate lyase (371 aa).

The signal sequence occupies residues 1–26 (MQSTDLKRLLIPSLLGLAIVTGSAQA). Residues 67–68 (SK), 140–141 (HT), and Y258 each bind substrate.

It belongs to the polysaccharide lyase 5 family.

The protein localises to the periplasm. It catalyses the reaction Eliminative cleavage of alginate to give oligosaccharides with 4-deoxy-alpha-L-erythro-hex-4-enuronosyl groups at their non-reducing ends and beta-D-mannuronate at their reducing end.. Functionally, catalyzes the depolymerization of alginate by cleaving the beta-1,4 glycosidic bond between two adjacent sugar residues via a beta-elimination mechanism. May serve to degrade mislocalized alginate that is trapped in the periplasmic space. This chain is Alginate lyase, found in Pseudomonas fluorescens (strain ATCC BAA-477 / NRRL B-23932 / Pf-5).